The following is a 367-amino-acid chain: Anhydro-N-acetylmuramic acid kinase (367 aa).

11-18 is a binding site for ATP; sequence GTSLDGVD.

Belongs to the anhydro-N-acetylmuramic acid kinase family.

It carries out the reaction 1,6-anhydro-N-acetyl-beta-muramate + ATP + H2O = N-acetyl-D-muramate 6-phosphate + ADP + H(+). It functions in the pathway amino-sugar metabolism; 1,6-anhydro-N-acetylmuramate degradation. The protein operates within cell wall biogenesis; peptidoglycan recycling. In terms of biological role, catalyzes the specific phosphorylation of 1,6-anhydro-N-acetylmuramic acid (anhMurNAc) with the simultaneous cleavage of the 1,6-anhydro ring, generating MurNAc-6-P. Is required for the utilization of anhMurNAc either imported from the medium or derived from its own cell wall murein, and thus plays a role in cell wall recycling. This Chromobacterium violaceum (strain ATCC 12472 / DSM 30191 / JCM 1249 / CCUG 213 / NBRC 12614 / NCIMB 9131 / NCTC 9757 / MK) protein is Anhydro-N-acetylmuramic acid kinase.